Here is a 205-residue protein sequence, read N- to C-terminus: Large ribosomal subunit protein uL3 (205 aa).

The interval 126–150 is disordered; that stretch reads GGPKTHGQSDRHRAPGSIGSTTTPG.

The protein belongs to the universal ribosomal protein uL3 family. In terms of assembly, part of the 50S ribosomal subunit. Forms a cluster with proteins L14 and L19.

One of the primary rRNA binding proteins, it binds directly near the 3'-end of the 23S rRNA, where it nucleates assembly of the 50S subunit. The polypeptide is Large ribosomal subunit protein uL3 (Dehalococcoides mccartyi (strain ATCC BAA-2100 / JCM 16839 / KCTC 5957 / BAV1)).